Consider the following 560-residue polypeptide: Alpha-keto-acid decarboxylase (560 aa).

Thiamine diphosphate is bound at residue Glu61. The interval 396-478 is thiamine pyrophosphate binding; it reads TSFYGMADHR…VVVNNDGYTV (83 aa). Positions 446, 473, and 475 each coordinate Mg(2+).

Belongs to the TPP enzyme family. A metal cation serves as cofactor. Requires thiamine diphosphate as cofactor.

Decarboxylates branched-chain and aromatic alpha-keto acids to aldehydes. This Mycobacterium bovis (strain ATCC BAA-935 / AF2122/97) protein is Alpha-keto-acid decarboxylase (kdc).